A 343-amino-acid polypeptide reads, in one-letter code: MELAFIPSPSRGVLHLGPVPLRGYAFCIIIGVFVAVWLGNKRWVARGGRPGTVADIAVWAVPFGLIGGRLYHVITDYQLYFSEGRDWVDAFKIWEGGLGIWGAIAFGAVGAWIGARRRGVPMPAYADAVAPGIALAQAIGRWGNWFNQELYGKATDLPWAVEITSTADGRVPGTYHPTFLYESLWCIGVALLVIWADRRFKLGHGRAFALYVAAYCAGRFWIEYMRVDDAHHILGLRLNNWTALFVFLLAVLYIVLSARKRPGREAVVEPGAETAAGDSGSAADKDVKGTKDAEDAEGAEDGAEKTDASGATEAPEDTSGADEADAAKDAEGVTNGADSAKKG.

4 consecutive transmembrane segments (helical) span residues 19 to 39 (VPLR…VWLG), 54 to 74 (ADIA…YHVI), 93 to 113 (IWEG…GAWI), and 119 to 139 (GVPM…AQAI). Arg-141 provides a ligand contact to a 1,2-diacyl-sn-glycero-3-phospho-(1'-sn-glycerol). 3 helical membrane-spanning segments follow: residues 176–196 (HPTF…VIWA), 202–224 (LGHG…WIEY), and 238–258 (LNNW…VLSA). Residues 269–343 (EPGAETAAGD…TNGADSAKKG (75 aa)) are disordered. Over residues 283–293 (ADKDVKGTKDA) the composition is skewed to basic and acidic residues. Residues 314-324 (APEDTSGADEA) are compositionally biased toward acidic residues.

Belongs to the Lgt family.

It localises to the cell membrane. The catalysed reaction is L-cysteinyl-[prolipoprotein] + a 1,2-diacyl-sn-glycero-3-phospho-(1'-sn-glycerol) = an S-1,2-diacyl-sn-glyceryl-L-cysteinyl-[prolipoprotein] + sn-glycerol 1-phosphate + H(+). It participates in protein modification; lipoprotein biosynthesis (diacylglyceryl transfer). Catalyzes the transfer of the diacylglyceryl group from phosphatidylglycerol to the sulfhydryl group of the N-terminal cysteine of a prolipoprotein, the first step in the formation of mature lipoproteins. The chain is Phosphatidylglycerol--prolipoprotein diacylglyceryl transferase 1 from Streptomyces coelicolor (strain ATCC BAA-471 / A3(2) / M145).